Here is a 965-residue protein sequence, read N- to C-terminus: Collagen alpha-1(I) chain (965 aa).

Residues 1–21 (SVPGPMGPSGPRGLPGPPGPG) are compositionally biased toward pro residues. The interval 1-965 (SVPGPMGPSG…PGPPGPPGPP (965 aa)) is disordered. A 4-hydroxyproline mark is found at proline 15, proline 18, proline 20, proline 29, proline 32, proline 35, proline 49, proline 64, proline 70, proline 79, and proline 85. Basic and acidic residues predominate over residues 52-66 (NGDDGEAGKPGRPGE). Residue lysine 88 is modified to 5-hydroxylysine; alternate. O-linked (Gal...) hydroxylysine; alternate glycosylation occurs at lysine 88. The residue at position 94 (serine 94) is a Phosphoserine. A compositionally biased stretch (low complexity) spans 102–118 (DAGPAGPKGEPGSPGEN). 4-hydroxyproline occurs at positions 112, 115, 121, 130, 136, 157, 166, 169, 196, 199, 211, 217, 226, 232, 235, and 250. A compositionally biased stretch (low complexity) spans 136-154 (PGASGPAGARGNDGATGAA). Residues 156–168 (PPGPTGPAGPPGF) show a composition bias toward pro residues. The segment covering 202 to 241 (AGAAGPAGNPGADGQPGAKGANGAPGIAGAPGFPGARGPS) has biased composition (low complexity). Lysine 253 carries the 5-hydroxylysine modification. 4-hydroxyproline occurs at positions 259, 262, 273, 282, 297, 303, 312, and 318. The span at 307–327 (GERGGPGSRGFPGADGAGPKG) shows a compositional bias: gly residues. 5-hydroxylysine is present on lysine 326. 4-hydroxyproline occurs at positions 335, 344, 350, 356, 365, 368, 377, 386, 392, 404, 413, 422, 425, 443, 460, 466, 472, 480, 492, 501, 509, 515, and 524. Low complexity predominate over residues 359 to 385 (KGLTGSPGSPGPDGKTGPPGPAGQDGR). Positions 394 to 413 (ARGQAGVMGFPGPKGAAGEP) are enriched in low complexity. Residues 472 to 482 (PGEADLGAPGP) are compositionally biased toward low complexity. Position 536 is a 5-hydroxylysine (lysine 536). Residues proline 542, proline 557, and proline 563 each carry the 4-hydroxyproline modification. Low complexity predominate over residues 569-583 (SGPSGPAGPTGARGA). At serine 572 the chain carries Phosphoserine. 4-hydroxyproline is present on residues proline 584, proline 590, proline 593, proline 602, proline 608, proline 626, proline 635, and proline 644. Over residues 596 to 623 (AGFAGPPGADGQPGAKGEPGDAGAKGDA) the composition is skewed to low complexity. Residues 625–637 (PPGPAGPTGPPGP) show a composition bias toward pro residues. Lysine 647 is subject to 5-hydroxylysine. Over residues 652–668 (SAGPPGATGFPGAAGRV) the composition is skewed to low complexity. Proline 656 and proline 662 each carry 4-hydroxyproline. The residue at position 670 (proline 670) is a 3-hydroxyproline. A 4-hydroxyproline mark is found at proline 671, proline 680, proline 683, proline 704, proline 713, proline 721, proline 730, proline 748, proline 757, proline 760, proline 766, proline 771, proline 777, proline 783, proline 791, and proline 797. A compositionally biased stretch (low complexity) spans 697–706 (ETGPAGRPGE). Positions 718-730 (KGSPGADGPAGAP) are enriched in low complexity. The segment covering 768-780 (KGPPGPMGPPGLA) has biased composition (pro residues). Lysine 806 is subject to 5-hydroxylysine. Positions 815-830 (SGPPGAPGAPGAPGPV) are enriched in pro residues. Proline 818, proline 821, and proline 824 each carry 4-hydroxyproline. Positions 851–865 (AGPAGARGPAGPQGP) are enriched in low complexity. Positions 866-880 (RGDKGETGEQGDRGI) are enriched in basic and acidic residues. Lysine 869 is modified (5-hydroxylysine). The residue at position 881 (lysine 881) is a 5-hydroxylysine; alternate. Residue lysine 881 is glycosylated (O-linked (Gal...) hydroxylysine; alternate). 4-hydroxyproline is present on residues proline 896, proline 899, proline 917, and proline 932. The segment covering 899–932 (PGEQGPSGASGPAGPRGPPGSAGSPGKDGLNGLP) has biased composition (low complexity). 3-hydroxyproline is present on proline 937. Proline 938 bears the 4-hydroxyproline mark. Over residues 950–965 (VGPPGPPGPPGPPGPP) the composition is skewed to pro residues. Proline 952 carries the 3-hydroxyproline modification. Residue proline 953 is modified to 4-hydroxyproline. Proline 955 bears the 3-hydroxyproline mark. Proline 956 carries the 4-hydroxyproline modification. Proline 958 carries the 3-hydroxyproline modification. 3 positions are modified to 4-hydroxyproline: proline 959, proline 962, and proline 965.

The protein belongs to the fibrillar collagen family. Trimers of one alpha 2(I) and two alpha 1(I) chains. In terms of processing, contains mostly 4-hydroxyproline. Proline residues at the third position of the tripeptide repeating unit (G-X-Y) are hydroxylated in some or all of the chains. Post-translationally, contains 3-hydroxyproline at a few sites. This modification occurs on the first proline residue in the sequence motif Gly-Pro-Hyp, where Hyp is 4-hydroxyproline. Lysine residues at the third position of the tripeptide repeating unit (G-X-Y) are 5-hydroxylated in some or all of the chains. In terms of processing, O-glycosylated on hydroxylated lysine residues. The O-linked glycan consists of a Glc-Gal disaccharide. Expressed in bones.

The protein resides in the secreted. It is found in the extracellular space. The protein localises to the extracellular matrix. Its function is as follows. Type I collagen is a member of group I collagen (fibrillar forming collagen). This Scelidotherium sp. (strain SLP-2019) (South American ground sloth) protein is Collagen alpha-1(I) chain.